The sequence spans 265 residues: Flap endonuclease Xni (265 aa).

D111 serves as a coordination point for Mg(2+). Residues V167 to A260 enclose the 5'-3' exonuclease domain. Positions 178, 189, and 192 each coordinate K(+). The segment at G191–T196 is interaction with DNA.

It belongs to the Xni family. Requires Mg(2+) as cofactor. The cofactor is K(+).

Functionally, has flap endonuclease activity. During DNA replication, flap endonucleases cleave the 5'-overhanging flap structure that is generated by displacement synthesis when DNA polymerase encounters the 5'-end of a downstream Okazaki fragment. The chain is Flap endonuclease Xni from Aeromonas salmonicida (strain A449).